The chain runs to 492 residues: NAD(P)H-quinone oxidoreductase subunit 2 A, chloroplastic (492 aa).

13 consecutive transmembrane segments (helical) span residues leucine 6–leucine 26, threonine 39–phenylalanine 59, valine 81–isoleucine 101, methionine 106–cysteine 126, leucine 131–tyrosine 151, tyrosine 165–glycine 185, proline 209–alanine 229, tryptophan 277–isoleucine 297, methionine 305–aspartate 325, glycine 329–alanine 349, alanine 377–phenylalanine 397, leucine 400–leucine 420, and methionine 466–isoleucine 486.

Belongs to the complex I subunit 2 family. As to quaternary structure, NDH is composed of at least 16 different subunits, 5 of which are encoded in the nucleus.

Its subcellular location is the plastid. It localises to the chloroplast thylakoid membrane. It carries out the reaction a plastoquinone + NADH + (n+1) H(+)(in) = a plastoquinol + NAD(+) + n H(+)(out). The enzyme catalyses a plastoquinone + NADPH + (n+1) H(+)(in) = a plastoquinol + NADP(+) + n H(+)(out). In terms of biological role, NDH shuttles electrons from NAD(P)H:plastoquinone, via FMN and iron-sulfur (Fe-S) centers, to quinones in the photosynthetic chain and possibly in a chloroplast respiratory chain. The immediate electron acceptor for the enzyme in this species is believed to be plastoquinone. Couples the redox reaction to proton translocation, and thus conserves the redox energy in a proton gradient. This Illicium oligandrum (Star anise) protein is NAD(P)H-quinone oxidoreductase subunit 2 A, chloroplastic.